Reading from the N-terminus, the 631-residue chain is Phosphomethylpyrimidine synthase (631 aa).

Substrate is bound by residues Asn239, Met268, Tyr297, His333, Ser353–Gly355, Asp394–Arg397, and Glu433. His437 contacts Zn(2+). Substrate is bound at residue Tyr460. Zn(2+) is bound at residue His501. [4Fe-4S] cluster is bound by residues Cys581, Cys584, and Cys589.

This sequence belongs to the ThiC family. Homodimer. It depends on [4Fe-4S] cluster as a cofactor.

It carries out the reaction 5-amino-1-(5-phospho-beta-D-ribosyl)imidazole + S-adenosyl-L-methionine = 4-amino-2-methyl-5-(phosphooxymethyl)pyrimidine + CO + 5'-deoxyadenosine + formate + L-methionine + 3 H(+). It participates in cofactor biosynthesis; thiamine diphosphate biosynthesis. Functionally, catalyzes the synthesis of the hydroxymethylpyrimidine phosphate (HMP-P) moiety of thiamine from aminoimidazole ribotide (AIR) in a radical S-adenosyl-L-methionine (SAM)-dependent reaction. In Klebsiella pneumoniae (strain 342), this protein is Phosphomethylpyrimidine synthase.